The following is a 287-amino-acid chain: Bifunctional protein FolD (287 aa).

NADP(+)-binding positions include 166–168 (GAS) and Ile232.

Belongs to the tetrahydrofolate dehydrogenase/cyclohydrolase family. In terms of assembly, homodimer.

The catalysed reaction is (6R)-5,10-methylene-5,6,7,8-tetrahydrofolate + NADP(+) = (6R)-5,10-methenyltetrahydrofolate + NADPH. The enzyme catalyses (6R)-5,10-methenyltetrahydrofolate + H2O = (6R)-10-formyltetrahydrofolate + H(+). It functions in the pathway one-carbon metabolism; tetrahydrofolate interconversion. Its function is as follows. Catalyzes the oxidation of 5,10-methylenetetrahydrofolate to 5,10-methenyltetrahydrofolate and then the hydrolysis of 5,10-methenyltetrahydrofolate to 10-formyltetrahydrofolate. The chain is Bifunctional protein FolD from Pectobacterium carotovorum subsp. carotovorum (strain PC1).